The chain runs to 666 residues: ATP-dependent zinc metalloprotease FtsH (666 aa).

The tract at residues 1–23 (MSREVTSGLPQDKPTGSAPPPPP) is disordered. The Cytoplasmic portion of the chain corresponds to 1–27 (MSREVTSGLPQDKPTGSAPPPPPPWRR). The chain crosses the membrane as a helical span at residues 28 to 48 (WLLPIGLLVSLVLLFTFPMRP). Residues 49–125 (SSGKTLTYSE…RPPGPSLASQ (77 aa)) are Extracellular-facing. A helical transmembrane segment spans residues 126-146 (VLAGVLSFLPFLLLLGLFAYS). Topologically, residues 147–666 (GRRAGAGFLA…RTAASSDDLL (520 aa)) are cytoplasmic. An ATP-binding site is contributed by 219-226 (GPPGTGKT). Zn(2+) is bound at residue H442. E443 is an active-site residue. Zn(2+) is bound by residues H446 and D518. The disordered stretch occupies residues 626–666 (PEEHREAAARHVRRPGIAAATGASMAGGSEPRTAASSDDLL). Low complexity predominate over residues 641–653 (GIAAATGASMAGG).

The protein in the central section; belongs to the AAA ATPase family. In the C-terminal section; belongs to the peptidase M41 family. Homohexamer. Zn(2+) serves as cofactor.

Its subcellular location is the cell membrane. In terms of biological role, acts as a processive, ATP-dependent zinc metallopeptidase for both cytoplasmic and membrane proteins. Plays a role in the quality control of integral membrane proteins. The chain is ATP-dependent zinc metalloprotease FtsH from Acidothermus cellulolyticus (strain ATCC 43068 / DSM 8971 / 11B).